A 265-amino-acid polypeptide reads, in one-letter code: uncharacterized protein (265 aa).

Residues 1–21 traverse the membrane as a helical segment; that stretch reads MAFNNSTIIIIIVIAFAFFLI. N-linked (GlcNAc...) asparagine; by host glycans are attached at residues N74 and N142.

The protein resides in the host membrane. Its subcellular location is the virion. This is an uncharacterized protein from Acanthamoeba polyphaga mimivirus (APMV).